The chain runs to 230 residues: Small ribosomal subunit protein uS3 (230 aa).

In terms of domain architecture, KH type-2 spans 43–95 (VNRVIIYSARPKMISEERKAHLAKLLELKFGLEKPVIEVLPIENPNLDAHVIA).

This sequence belongs to the universal ribosomal protein uS3 family. Part of the 30S ribosomal subunit.

In terms of biological role, binds the lower part of the 30S subunit head. The sequence is that of Small ribosomal subunit protein uS3 from Nanoarchaeum equitans (strain Kin4-M).